Consider the following 742-residue polypeptide: Mechanosensitive ion channel protein 9 (742 aa).

Positions 1–117 (MAERRVSNGE…REENGGRSLR (117 aa)) are disordered. A compositionally biased stretch (basic and acidic residues) spans 17 to 26 (SDKEDSKDPR). Phosphoserine occurs at positions 28 and 36. Positions 105 to 117 (DSTREENGGRSLR) are enriched in basic and acidic residues. Phosphoserine is present on residues Ser-142 and Ser-145. 6 helical membrane-spanning segments follow: residues 180–200 (AFLE…SLTI), 221–241 (MVTL…VFII), 261–281 (NVQV…LFDG), 292–312 (FLDF…LFLV), 524–544 (LITG…LDIA), and 559–579 (LAFM…FVFV).

Belongs to the MscS (TC 1.A.23) family. As to expression, detected in the epidermis, cortex, and endodermis of the root tip.

Its subcellular location is the cell membrane. Mechanosensitive channel that opens in response to stretch forces in the membrane lipid bilayer. This is Mechanosensitive ion channel protein 9 (MSL9) from Arabidopsis thaliana (Mouse-ear cress).